Here is a 303-residue protein sequence, read N- to C-terminus: ADP-ribosyl cyclase/cyclic ADP-ribose hydrolase 1 (303 aa).

Residues Met-1–Lys-21 lie on the Cytoplasmic side of the membrane. The chain crosses the membrane as a helical; Signal-anchor for type II membrane protein span at residues Ala-22–Leu-44. Topologically, residues Trp-45–Val-303 are extracellular. Intrachain disulfides connect Cys-69–Cys-85, Cys-102–Cys-183, and Cys-163–Cys-176. A glycan (N-linked (GlcNAc...) asparagine) is linked at Asn-103. Cys-122 is a catalytic residue. Asn-123 carries an N-linked (GlcNAc...) asparagine glycan. Cys-204 is an active-site residue. Residues Asn-212 and Asn-222 are each glycosylated (N-linked (GlcNAc...) asparagine). 2 disulfides stabilise this stretch: Cys-257–Cys-278 and Cys-290–Cys-299.

This sequence belongs to the ADP-ribosyl cyclase family. As to quaternary structure, homodimer. Spleen, liver, heart, thymus, thyroid gland, ileum, colon, cerebellum, salivary gland, adrenal gland, jejunum, islets of Langerhans and osteoclasts.

The protein localises to the cell membrane. The catalysed reaction is NAD(+) = cyclic ADP-beta-D-ribose + nicotinamide + H(+). It catalyses the reaction nicotinate + NADP(+) = nicotinate-adenine dinucleotide phosphate + nicotinamide. The enzyme catalyses NAD(+) + H2O = ADP-D-ribose + nicotinamide + H(+). Its activity is regulated as follows. Both NAADP and cADPR synthesis are inhibited by nicotinic acid. Functionally, synthesizes the second messengers cyclic ADP-ribose and nicotinate-adenine dinucleotide phosphate, the former a second messenger for glucose-induced insulin secretion, the latter a Ca(2+) mobilizer. Also has cADPR hydrolase activity. Its function is as follows. Regulates osteoclastic bone resorption, probably via production of cyclic ADP-ribose and triggering of a cytosolic calcium ion signal through ryanodine receptor activation. The polypeptide is ADP-ribosyl cyclase/cyclic ADP-ribose hydrolase 1 (Cd38) (Rattus norvegicus (Rat)).